Consider the following 113-residue polypeptide: Protein NATD1 (113 aa).

Positions 1 to 16 (MAQSPAAASPGAPEQG) are enriched in low complexity. The segment at 1 to 20 (MAQSPAAASPGAPEQGCPIR) is disordered. The N-acetyltransferase domain maps to 22 to 112 (EHDRRRRQFT…PLPQYLERLQ (91 aa)).

This sequence belongs to the NATD1 family.

The protein is Protein NATD1 (NATD1) of Bos taurus (Bovine).